The following is a 234-amino-acid chain: 2-C-methyl-D-erythritol 4-phosphate cytidylyltransferase (234 aa).

It belongs to the IspD/TarI cytidylyltransferase family. IspD subfamily.

The enzyme catalyses 2-C-methyl-D-erythritol 4-phosphate + CTP + H(+) = 4-CDP-2-C-methyl-D-erythritol + diphosphate. Its pathway is isoprenoid biosynthesis; isopentenyl diphosphate biosynthesis via DXP pathway; isopentenyl diphosphate from 1-deoxy-D-xylulose 5-phosphate: step 2/6. Functionally, catalyzes the formation of 4-diphosphocytidyl-2-C-methyl-D-erythritol from CTP and 2-C-methyl-D-erythritol 4-phosphate (MEP). This is 2-C-methyl-D-erythritol 4-phosphate cytidylyltransferase from Syntrophus aciditrophicus (strain SB).